Consider the following 413-residue polypeptide: Argininosuccinate synthase (413 aa).

ATP-binding positions include 14–22 (AYSGGLDTS) and Ala-41. Tyr-94 and Ser-99 together coordinate L-citrulline. Gly-124 provides a ligand contact to ATP. L-aspartate contacts are provided by Thr-126, Asn-130, and Asp-131. Asn-130 is an L-citrulline binding site. 5 residues coordinate L-citrulline: Arg-134, Ser-185, Ser-194, Glu-270, and Tyr-282.

It belongs to the argininosuccinate synthase family. Type 1 subfamily. As to quaternary structure, homotetramer.

It is found in the cytoplasm. The catalysed reaction is L-citrulline + L-aspartate + ATP = 2-(N(omega)-L-arginino)succinate + AMP + diphosphate + H(+). The protein operates within amino-acid biosynthesis; L-arginine biosynthesis; L-arginine from L-ornithine and carbamoyl phosphate: step 2/3. This is Argininosuccinate synthase from Hyphomonas neptunium (strain ATCC 15444).